A 194-amino-acid polypeptide reads, in one-letter code: E3 ubiquitin-protein ligase RNF4 (194 aa).

The segment covering 1-12 (MSTRNPQRKRRG) has biased composition (basic residues). The segment at 1-20 (MSTRNPQRKRRGGAVNSRQT) is required for ubiquitination activity. A disordered region spans residues 1–36 (MSTRNPQRKRRGGAVNSRQTQKRTRETTSTPEISLE). Positions 6–65 (PQRKRRGGAVNSRQTQKRTRETTSTPEISLEAEPIELVETVGDEIVDLTCESLEPVVVDL) are mediates interaction with TRPS1. Short sequence motifs (SUMO interaction motif) lie at residues 40–43 (IELV), 50–53 (IVDL), 61–63 (VVV), and 71–74 (VVIV). Phosphoserine is present on residues Ser98 and Ser99. Residues Cys136, Cys139, Cys158, His160, Cys163, Cys166, Cys177, and Cys180 each contribute to the Zn(2+) site. The segment at 136–181 (CPICMDGYSEIVQNGRLIVSTECGHVFCSQCLRDSLKNANTCPTCR) adopts an RING-type zinc-finger fold.

Homodimer (via RING-type zinc finger domain). Interacts with GSC2. Interacts with AR/the androgen receptor and TBP. Interacts with TCF20. Interacts with PATZ1. Interacts with TRPS1; negatively regulates TRPS1 transcriptional repressor activity. Interacts with PML (isoform PML-1, isoform PML-2, isoform PML-3, isoform PML-4, isoform PML-5 and isoform PML-6). Interacts with PRDM1/Blimp-1. In terms of processing, sumoylated; conjugated by one or two SUMO1 moieties. Post-translationally, autoubiquitinated. In terms of tissue distribution, widely expressed with highest levels in testis.

It is found in the cytoplasm. The protein resides in the nucleus. The protein localises to the nucleoplasm. Its subcellular location is the PML body. The catalysed reaction is S-ubiquitinyl-[E2 ubiquitin-conjugating enzyme]-L-cysteine + [acceptor protein]-L-lysine = [E2 ubiquitin-conjugating enzyme]-L-cysteine + N(6)-ubiquitinyl-[acceptor protein]-L-lysine.. The protein operates within protein modification; protein ubiquitination. Its function is as follows. E3 ubiquitin-protein ligase which binds polysumoylated chains covalently attached to proteins and mediates 'Lys-6'-, 'Lys-11'-, 'Lys-48'- and 'Lys-63'-linked polyubiquitination of those substrates and their subsequent targeting to the proteasome for degradation. Regulates the degradation of several proteins including PML and the transcriptional activator PEA3. Involved in chromosome alignment and spindle assembly, it regulates the kinetochore CENPH-CENPI-CENPK complex by targeting polysumoylated CENPI to proteasomal degradation. Regulates the cellular responses to hypoxia and heat shock through degradation of respectively EPAS1 and PARP1. Alternatively, it may also bind DNA/nucleosomes and have a more direct role in the regulation of transcription for instance enhancing basal transcription and steroid receptor-mediated transcriptional activation. Catalyzes ubiquitination of sumoylated PARP1 in response to PARP1 trapping to chromatin, leading to PARP1 removal from chromatin by VCP/p97. This chain is E3 ubiquitin-protein ligase RNF4, found in Rattus norvegicus (Rat).